A 78-amino-acid polypeptide reads, in one-letter code: Defensin-like protein 90 (78 aa).

The N-terminal stretch at Met1–Gly25 is a signal peptide. Disulfide bonds link Cys33/Cys70, Cys38/Cys59, Cys44/Cys68, and Cys48/Cys69.

It belongs to the DEFL family.

It localises to the secreted. This Arabidopsis thaliana (Mouse-ear cress) protein is Defensin-like protein 90.